A 279-amino-acid chain; its full sequence is Phosphate import ATP-binding protein PstB 1 (279 aa).

An ABC transporter domain is found at 26–274 (VMDCKLDKIF…PREQLTSDYI (249 aa)). Residue 59–66 (GPSGCGKS) coordinates ATP.

The protein belongs to the ABC transporter superfamily. Phosphate importer (TC 3.A.1.7) family. As to quaternary structure, the complex is composed of two ATP-binding proteins (PstB), two transmembrane proteins (PstC and PstA) and a solute-binding protein (PstS).

The protein resides in the cell inner membrane. It carries out the reaction phosphate(out) + ATP + H2O = ADP + 2 phosphate(in) + H(+). Part of the ABC transporter complex PstSACB involved in phosphate import. Responsible for energy coupling to the transport system. The protein is Phosphate import ATP-binding protein PstB 1 of Pseudomonas putida (strain ATCC 47054 / DSM 6125 / CFBP 8728 / NCIMB 11950 / KT2440).